We begin with the raw amino-acid sequence, 62 residues long: MKAFYGILIILLFCSMFKLNESTTINVKCTSPKQCLKPCKDLYGPHAGAKCMNGKCKCYNNG.

The first 22 residues, 1 to 22 (MKAFYGILIILLFCSMFKLNES), serve as a signal peptide directing secretion. 3 cysteine pairs are disulfide-bonded: Cys-29–Cys-51, Cys-35–Cys-56, and Cys-39–Cys-58. The residue at position 61 (Asn-61) is an Asparagine amide.

The protein belongs to the short scorpion toxin superfamily. Potassium channel inhibitor family. Alpha-KTx 02 subfamily. In terms of tissue distribution, expressed by the venom gland.

It is found in the secreted. Blocks voltage-gated potassium channels. The polypeptide is Toxin Ct28 (Centruroides tecomanus (Scorpion)).